We begin with the raw amino-acid sequence, 765 residues long: Polyribonucleotide nucleotidyltransferase (765 aa).

Residues Asp-556 and Asp-562 each coordinate Mg(2+). The KH domain occupies Pro-622 to Ile-681. Residues Gly-693–Val-762 form the S1 motif domain.

It belongs to the polyribonucleotide nucleotidyltransferase family. Requires Mg(2+) as cofactor.

It localises to the cytoplasm. The enzyme catalyses RNA(n+1) + phosphate = RNA(n) + a ribonucleoside 5'-diphosphate. Functionally, involved in mRNA degradation. Catalyzes the phosphorolysis of single-stranded polyribonucleotides processively in the 3'- to 5'-direction. This Corynebacterium urealyticum (strain ATCC 43042 / DSM 7109) protein is Polyribonucleotide nucleotidyltransferase.